The sequence spans 402 residues: Succinylornithine transaminase (402 aa).

At lysine 252 the chain carries N6-(pyridoxal phosphate)lysine.

It belongs to the class-III pyridoxal-phosphate-dependent aminotransferase family. AstC subfamily. The cofactor is pyridoxal 5'-phosphate.

It catalyses the reaction N(2)-succinyl-L-ornithine + 2-oxoglutarate = N-succinyl-L-glutamate 5-semialdehyde + L-glutamate. The protein operates within amino-acid degradation; L-arginine degradation via AST pathway; L-glutamate and succinate from L-arginine: step 3/5. In terms of biological role, catalyzes the transamination of N(2)-succinylornithine and alpha-ketoglutarate into N(2)-succinylglutamate semialdehyde and glutamate. Can also act as an acetylornithine aminotransferase. This chain is Succinylornithine transaminase, found in Photorhabdus laumondii subsp. laumondii (strain DSM 15139 / CIP 105565 / TT01) (Photorhabdus luminescens subsp. laumondii).